The following is a 119-amino-acid chain: Small ribosomal subunit protein uS13m (119 aa).

This sequence belongs to the universal ribosomal protein uS13 family. Part of the small ribosomal subunit.

It is found in the mitochondrion. Its function is as follows. Located at the top of the head of the small subunit, it contacts several helices of the small subunit rRNA. The chain is Small ribosomal subunit protein uS13m (RPS13) from Prototheca wickerhamii.